The following is a 183-amino-acid chain: MILVDWQLRDRIARGHIRIDPFDPALVQPNSIDIRLGNHFVWYAPGKQVIDPYDKTTVTSGVEGKHADFFDLLPGQFVLAETLECISLPDNIVATIEGKSSIARLGVTLHQTGGWIDAGFRGSITLEMANVNARPVRVYAGMPIGQLVFYTTERAENPYDKKADAKYLDQRQATLSKYHENRK.

DCTP-binding positions include Lys-99–Arg-104, Asp-117, Thr-125–Glu-127, Gln-146, Tyr-159, Lys-166, and Gln-170. Glu-127 acts as the Proton donor/acceptor in catalysis.

It belongs to the dCTP deaminase family. As to quaternary structure, homotrimer.

The catalysed reaction is dCTP + 2 H2O = dUMP + NH4(+) + diphosphate. Its pathway is pyrimidine metabolism; dUMP biosynthesis; dUMP from dCTP: step 1/1. Functionally, bifunctional enzyme that catalyzes both the deamination of dCTP to dUTP and the hydrolysis of dUTP to dUMP without releasing the toxic dUTP intermediate. The polypeptide is dCTP deaminase, dUMP-forming (Methanoregula boonei (strain DSM 21154 / JCM 14090 / 6A8)).